The chain runs to 502 residues: Probable cytosol aminopeptidase (502 aa).

2 residues coordinate Mn(2+): lysine 269 and aspartate 274. The active site involves lysine 281. The Mn(2+) site is built by aspartate 292, aspartate 351, and glutamate 353. Arginine 355 is a catalytic residue.

The protein belongs to the peptidase M17 family. The cofactor is Mn(2+).

The protein resides in the cytoplasm. The enzyme catalyses Release of an N-terminal amino acid, Xaa-|-Yaa-, in which Xaa is preferably Leu, but may be other amino acids including Pro although not Arg or Lys, and Yaa may be Pro. Amino acid amides and methyl esters are also readily hydrolyzed, but rates on arylamides are exceedingly low.. The catalysed reaction is Release of an N-terminal amino acid, preferentially leucine, but not glutamic or aspartic acids.. Presumably involved in the processing and regular turnover of intracellular proteins. Catalyzes the removal of unsubstituted N-terminal amino acids from various peptides. The protein is Probable cytosol aminopeptidase of Shewanella sediminis (strain HAW-EB3).